The sequence spans 407 residues: Membrane protein MosC (407 aa).

The disordered stretch occupies residues 1-24 (MTRTSPRHHAPSETKRRVPMGGVH). Helical transmembrane passes span 31–51 (LTIT…AAWA), 69–89 (GVLL…AGYF), 109–129 (ALVL…IVLF), 157–177 (AFLH…FGVI), 186–206 (SVTL…HLLD), 225–245 (LLMF…IAEW), 255–275 (QVTD…MIAG), 290–310 (ALIA…LFMP), 316–336 (LAGF…IFSE), 347–367 (VGLT…PPII), and 377–397 (GRAL…SVFF).

Its subcellular location is the cell membrane. In terms of biological role, may be a membrane transport protein that could either transport a precursor for rhizopine biosynthesis into bacteroids or the finished product from the bacteroids. The sequence is that of Membrane protein MosC (mosC) from Rhizobium meliloti (Ensifer meliloti).